The chain runs to 284 residues: Type II methyltransferase M1.DpnII (284 aa).

7 residues coordinate S-adenosyl-L-methionine: Trp17, Lys21, Gly46, Asp62, Asp177, Phe178, and Asp194.

The protein belongs to the N(4)/N(6)-methyltransferase family. As to quaternary structure, monomer. Homodimer.

The enzyme catalyses a 2'-deoxyadenosine in DNA + S-adenosyl-L-methionine = an N(6)-methyl-2'-deoxyadenosine in DNA + S-adenosyl-L-homocysteine + H(+). An alpha subtype methylase that recognizes the double-stranded sequence 5'-GATC-3', methylates A-2 on both strands, and protects the DNA from cleavage by the DpnII endonuclease. The protein is Type II methyltransferase M1.DpnII of Streptococcus pneumoniae.